Consider the following 1018-residue polypeptide: MSFRSPGAPTARMPRRSRLLAPVGAAVVVIIAGIMFAANFWTEYRWFGSVGYTTVFWTELRTRALLFAGGALLMALAVGLSVYFAYRTRPAYRPFSLEQQGLDRYRSSIDPHRKVFFWGLVGGLALLTGASATAEWQTFLQFANATKFGAQDAQFGLDISFYTFTYPFLQVIIGYLYTAVVIAFIAGVVVHYLYGGVRLQAQGQRVTPAARVHLSVLLGVFLLLRAADYWLEQYGLVFSNRGYTFGASYTDVNAVLYAKIILFFIALVCAVLFFANIYFKNARVPLVSLGLMVLSAILIGGVYPAIVQQVTVSPNEQRLERPYIQRNIEATRAAYGIDGAEVIDYDAQTELTTAELAAEAETIPSVRLVDPAVVSQTFQQLQQVRGFYQFPQVLEVDRYTTSDGETVDTIVAARELDGPPSQEDRWLTRHLVYTHGFGMVAAAGNQVDSEGRPVFLEYNIPPTGELSQVGEGYEPRIYFGREGAEYVIVNAEAEYDYPVDPDTPEVPTTEDAVVPTPSPSPEADEAPAPADSREEGSAQEQQDQEGQDGGEDAQGTEEEQSGQGSGQANNYYDGKGGVQLKSFFDKLMYALKYQEINILLNNAISNESQIIYVRDPAERVEKVAPFLTVDGKAYPAVVDGRIVWIVDAYTTSDRYPYSTPIDLAQATTDTFTESTTAVNALPGNRVNYIRNSVKATVDAYDGTVTLYGWDEEDPVLQTWSKAFPGVVTSKDEISDTLLSHLRYPDDLYKVQREILERYHITNADAFYGGQDFWTVPNDPKPQAGNNPEPPYRQTIRFPGDDTPTYSLTSTFVPRGRENLAAFMAVNSDASSEDYGQMRILELPRSTAVQGPGQIQNTFQSSAEVREVLLPLEQSSAQVTYGNLLTLPFAGGLLYVEPLYVQAGGSDASYPLLQQVLVGFGDQVAIGSNLQEALNNLFDGDEAPLEEPTTDGEAREEEEQPQASSDLAQALEDAAEAYEEGQAALREGDFAAYGEANERLKEALDRAKAASGSNEEKDE.

Helical transmembrane passes span 20-40 (LAPVGAAVVVIIAGIMFAANF), 64-84 (ALLFAGGALLMALAVGLSVYF), 115-135 (VFFWGLVGGLALLTGASATAE), 171-191 (VIIGYLYTAVVIAFIAGVVVH), 212-232 (VHLSVLLGVFLLLRAADYWLE), 254-274 (AVLYAKIILFFIALVCAVLFF), and 287-307 (VSLGLMVLSAILIGGVYPAIV). Disordered regions lie at residues 497–570 (YPVD…QANN) and 939–965 (GDEAPLEEPTTDGEAREEEEQPQASSD). Composition is skewed to acidic residues over residues 542–560 (QDQEGQDGGEDAQGTEEEQ) and 939–959 (GDEAPLEEPTTDGEAREEEEQ).

The protein belongs to the UPF0182 family.

The protein localises to the cell membrane. The protein is UPF0182 protein Tfu_0541 of Thermobifida fusca (strain YX).